The primary structure comprises 199 residues: ATP-dependent Clp protease proteolytic subunit (199 aa).

Residue Ser103 is the Nucleophile of the active site. His128 is an active-site residue.

Belongs to the peptidase S14 family. In terms of assembly, fourteen ClpP subunits assemble into 2 heptameric rings which stack back to back to give a disk-like structure with a central cavity, resembling the structure of eukaryotic proteasomes.

It localises to the cytoplasm. The enzyme catalyses Hydrolysis of proteins to small peptides in the presence of ATP and magnesium. alpha-casein is the usual test substrate. In the absence of ATP, only oligopeptides shorter than five residues are hydrolyzed (such as succinyl-Leu-Tyr-|-NHMec, and Leu-Tyr-Leu-|-Tyr-Trp, in which cleavage of the -Tyr-|-Leu- and -Tyr-|-Trp bonds also occurs).. Functionally, cleaves peptides in various proteins in a process that requires ATP hydrolysis. Has a chymotrypsin-like activity. Plays a major role in the degradation of misfolded proteins. This Photobacterium profundum (strain SS9) protein is ATP-dependent Clp protease proteolytic subunit.